The sequence spans 456 residues: ATP-dependent protease ATPase subunit HslU (456 aa).

ATP contacts are provided by residues V18, 60-65 (GVGKTE), D269, E334, and R406.

This sequence belongs to the ClpX chaperone family. HslU subfamily. In terms of assembly, a double ring-shaped homohexamer of HslV is capped on each side by a ring-shaped HslU homohexamer. The assembly of the HslU/HslV complex is dependent on binding of ATP.

The protein localises to the cytoplasm. Functionally, ATPase subunit of a proteasome-like degradation complex; this subunit has chaperone activity. The binding of ATP and its subsequent hydrolysis by HslU are essential for unfolding of protein substrates subsequently hydrolyzed by HslV. HslU recognizes the N-terminal part of its protein substrates and unfolds these before they are guided to HslV for hydrolysis. The sequence is that of ATP-dependent protease ATPase subunit HslU from Desulfosudis oleivorans (strain DSM 6200 / JCM 39069 / Hxd3) (Desulfococcus oleovorans).